Reading from the N-terminus, the 266-residue chain is Methyl-coenzyme M reductase II subunit gamma (266 aa).

Coenzyme M is bound at residue Arg123.

It belongs to the methyl-coenzyme M reductase gamma subunit family. In terms of assembly, MCR is a hexamer of two alpha, two beta, and two gamma chains, forming a dimer of heterotrimers. Coenzyme F430 is required as a cofactor.

The enzyme catalyses coenzyme B + methyl-coenzyme M = methane + coenzyme M-coenzyme B heterodisulfide. It functions in the pathway one-carbon metabolism; methyl-coenzyme M reduction; methane from methyl-coenzyme M: step 1/1. Component of the methyl-coenzyme M reductase (MCR) I that catalyzes the reductive cleavage of methyl-coenzyme M (CoM-S-CH3 or 2-(methylthio)ethanesulfonate) using coenzyme B (CoB or 7-mercaptoheptanoylthreonine phosphate) as reductant which results in the production of methane and the mixed heterodisulfide of CoB and CoM (CoM-S-S-CoB). This is the final step in methanogenesis. This Methanocaldococcus jannaschii (strain ATCC 43067 / DSM 2661 / JAL-1 / JCM 10045 / NBRC 100440) (Methanococcus jannaschii) protein is Methyl-coenzyme M reductase II subunit gamma (mrtG).